Consider the following 221-residue polypeptide: Interleukin-12 subunit alpha (221 aa).

The signal sequence occupies residues 1 to 25; sequence MCPLRSLLLISTLVLLHHLPHLSLG. 3 disulfide bridges follow: Cys-39-Cys-112, Cys-66-Cys-198, and Cys-87-Cys-125. Residue Asn-95 is glycosylated (N-linked (GlcNAc...) asparagine).

This sequence belongs to the IL-6 superfamily. In terms of assembly, heterodimer with IL12B; disulfide-linked. This heterodimer is known as interleukin IL-12. Heterodimer with EBI3/IL27B; not disulfide-linked. This heterodimer is known as interleukin IL-35. Interacts with NBR1; this interaction promotes IL-12 secretion.

It localises to the secreted. Its function is as follows. Heterodimerizes with IL12B to form the IL-12 cytokine or with EBI3/IL27B to form the IL-35 cytokine. IL-12 is primarily produced by professional antigen-presenting cells (APCs) such as B-cells and dendritic cells (DCs) as well as macrophages and granulocytes and regulates T-cell and natural killer-cell responses, induces the production of interferon-gamma (IFN-gamma), favors the differentiation of T-helper 1 (Th1) cells and is an important link between innate resistance and adaptive immunity. Mechanistically, exerts its biological effects through a receptor composed of IL12R1 and IL12R2 subunits. Binding to the receptor results in the rapid tyrosine phosphorylation of a number of cellular substrates including the JAK family kinases TYK2 and JAK2. In turn, recruited STAT4 gets phosphorylated and translocates to the nucleus where it regulates cytokine/growth factor responsive genes. As part of IL-35, plays essential roles in maintaining the immune homeostasis of the liver microenvironment and also functions as an immune-suppressive cytokine. Mediates biological events through unconventional receptors composed of IL12RB2 and gp130/IL6ST heterodimers or homodimers. Signaling requires the transcription factors STAT1 and STAT4, which form a unique heterodimer that binds to distinct DNA sites. The polypeptide is Interleukin-12 subunit alpha (IL12A) (Capra hircus (Goat)).